Here is a 776-residue protein sequence, read N- to C-terminus: Ion-translocating oxidoreductase complex subunit C (776 aa).

2 consecutive 4Fe-4S ferredoxin-type domains span residues 368–397 and 407–436; these read MGAP…QQLY and KATA…VQYF. [4Fe-4S] cluster-binding residues include cysteine 377, cysteine 380, cysteine 383, cysteine 387, cysteine 416, cysteine 419, cysteine 422, and cysteine 426. Basic and acidic residues-rich tracts occupy residues 534–543, 597–611, 633–647, 669–683, and 705–719; these read ARARQAEKVQ, ADEK…RKAA, and ADEK…RKAT. The tract at residues 534 to 754 is disordered; sequence ARARQAEKVQ…ENEAEDPRKA (221 aa). The segment covering 721 to 743 has biased composition (low complexity); it reads EAAIARAKARKAAQAGERAQAAN.

Belongs to the 4Fe4S bacterial-type ferredoxin family. RnfC subfamily. In terms of assembly, the complex is composed of six subunits: RnfA, RnfB, RnfC, RnfD, RnfE and RnfG. Requires [4Fe-4S] cluster as cofactor.

The protein resides in the cell inner membrane. Functionally, part of a membrane-bound complex that couples electron transfer with translocation of ions across the membrane. This chain is Ion-translocating oxidoreductase complex subunit C, found in Cronobacter sakazakii (strain ATCC BAA-894) (Enterobacter sakazakii).